A 198-amino-acid chain; its full sequence is Dephospho-CoA kinase (198 aa).

One can recognise a DPCK domain in the interval 3–198; it reads IVGITGGIGS…LLAKERLELA (196 aa). 11–16 is an ATP binding site; sequence GSGKTT.

Belongs to the CoaE family.

The protein resides in the cytoplasm. It catalyses the reaction 3'-dephospho-CoA + ATP = ADP + CoA + H(+). It functions in the pathway cofactor biosynthesis; coenzyme A biosynthesis; CoA from (R)-pantothenate: step 5/5. Functionally, catalyzes the phosphorylation of the 3'-hydroxyl group of dephosphocoenzyme A to form coenzyme A. The sequence is that of Dephospho-CoA kinase from Dehalococcoides mccartyi (strain ATCC BAA-2266 / KCTC 15142 / 195) (Dehalococcoides ethenogenes (strain 195)).